Reading from the N-terminus, the 868-residue chain is Alanine--tRNA ligase (868 aa).

Residues His556, His560, Cys666, and His670 each coordinate Zn(2+).

It belongs to the class-II aminoacyl-tRNA synthetase family. The cofactor is Zn(2+).

Its subcellular location is the cytoplasm. It carries out the reaction tRNA(Ala) + L-alanine + ATP = L-alanyl-tRNA(Ala) + AMP + diphosphate. In terms of biological role, catalyzes the attachment of alanine to tRNA(Ala) in a two-step reaction: alanine is first activated by ATP to form Ala-AMP and then transferred to the acceptor end of tRNA(Ala). Also edits incorrectly charged Ser-tRNA(Ala) and Gly-tRNA(Ala) via its editing domain. In Elusimicrobium minutum (strain Pei191), this protein is Alanine--tRNA ligase.